The following is a 1111-amino-acid chain: ATP-dependent DNA helicase mph1 (1111 aa).

2 stretches are compositionally biased toward acidic residues: residues 1 to 18 (MSVS…EIDD) and 47 to 65 (VFDE…DEFQ). 4 disordered regions span residues 1-81 (MSVS…EDVE), 101-144 (FVTQ…HQPD), 210-240 (AFDS…RTNR), and 259-280 (IPSQ…PTHH). Polar residues-rich tracts occupy residues 132–143 (PTTTTVDASHQP) and 215–238 (LSLS…QFRT). Residues 306–474 (IAQRGLFHNL…AVIDGLGIAK (169 aa)) form the Helicase ATP-binding domain. 319-326 (LPTGLGKT) contacts ATP. A DEAH box motif is present at residues 422–425 (DEAH). One can recognise a Helicase C-terminal domain in the interval 644 to 818 (YLKQVVLNHF…GTRFTFHDDT (175 aa)). Disordered stretches follow at residues 836-898 (IDIP…RKPT), 998-1047 (SVLS…CTPE), and 1092-1111 (AERH…DTEE). Positions 852 to 864 (KRARPPKRPPKKF) are enriched in basic residues.

The protein belongs to the DEAD box helicase family. DEAH subfamily. FANCM sub-subfamily. Interacts with the MHF histone-fold complex to form the FANCM-MHF complex.

Its subcellular location is the nucleus. The enzyme catalyses ATP + H2O = ADP + phosphate + H(+). ATP-dependent DNA helicase involved in DNA damage repair by homologous recombination and in genome maintenance. Capable of unwinding D-loops. Plays a role in limiting crossover recombinants during mitotic DNA double-strand break (DSB) repair. Component of a FANCM-MHF complex which promotes gene conversion at blocked replication forks, probably by reversal of the stalled fork. The chain is ATP-dependent DNA helicase mph1 from Neosartorya fischeri (strain ATCC 1020 / DSM 3700 / CBS 544.65 / FGSC A1164 / JCM 1740 / NRRL 181 / WB 181) (Aspergillus fischerianus).